We begin with the raw amino-acid sequence, 308 residues long: 4-hydroxy-3-methylbut-2-enyl diphosphate reductase 2 (308 aa).

Cys-12 contributes to the [4Fe-4S] cluster binding site. Residues His-41 and His-74 each contribute to the (2E)-4-hydroxy-3-methylbut-2-enyl diphosphate site. His-41 and His-74 together coordinate dimethylallyl diphosphate. Residues His-41 and His-74 each coordinate isopentenyl diphosphate. Cys-96 is a binding site for [4Fe-4S] cluster. His-124 contributes to the (2E)-4-hydroxy-3-methylbut-2-enyl diphosphate binding site. His-124 serves as a coordination point for dimethylallyl diphosphate. Position 124 (His-124) interacts with isopentenyl diphosphate. Glu-126 acts as the Proton donor in catalysis. (2E)-4-hydroxy-3-methylbut-2-enyl diphosphate is bound at residue Thr-164. Cys-194 contributes to the [4Fe-4S] cluster binding site. Ser-222, Ser-223, Asn-224, and Ser-266 together coordinate (2E)-4-hydroxy-3-methylbut-2-enyl diphosphate. Ser-222, Ser-223, Asn-224, and Ser-266 together coordinate dimethylallyl diphosphate. Isopentenyl diphosphate is bound by residues Ser-222, Ser-223, Asn-224, and Ser-266.

The protein belongs to the IspH family. [4Fe-4S] cluster serves as cofactor.

It carries out the reaction isopentenyl diphosphate + 2 oxidized [2Fe-2S]-[ferredoxin] + H2O = (2E)-4-hydroxy-3-methylbut-2-enyl diphosphate + 2 reduced [2Fe-2S]-[ferredoxin] + 2 H(+). The catalysed reaction is dimethylallyl diphosphate + 2 oxidized [2Fe-2S]-[ferredoxin] + H2O = (2E)-4-hydroxy-3-methylbut-2-enyl diphosphate + 2 reduced [2Fe-2S]-[ferredoxin] + 2 H(+). It participates in isoprenoid biosynthesis; dimethylallyl diphosphate biosynthesis; dimethylallyl diphosphate from (2E)-4-hydroxy-3-methylbutenyl diphosphate: step 1/1. Its pathway is isoprenoid biosynthesis; isopentenyl diphosphate biosynthesis via DXP pathway; isopentenyl diphosphate from 1-deoxy-D-xylulose 5-phosphate: step 6/6. Functionally, catalyzes the conversion of 1-hydroxy-2-methyl-2-(E)-butenyl 4-diphosphate (HMBPP) into a mixture of isopentenyl diphosphate (IPP) and dimethylallyl diphosphate (DMAPP). Acts in the terminal step of the DOXP/MEP pathway for isoprenoid precursor biosynthesis. This is 4-hydroxy-3-methylbut-2-enyl diphosphate reductase 2 from Bradyrhizobium diazoefficiens (strain JCM 10833 / BCRC 13528 / IAM 13628 / NBRC 14792 / USDA 110).